The primary structure comprises 193 residues: dCTP deaminase (193 aa).

Residues 110–115 (RSSLAR), D128, 136–138 (VLE), Y171, K178, and Q182 contribute to the dCTP site. Residue E138 is the Proton donor/acceptor of the active site.

Belongs to the dCTP deaminase family. Homotrimer.

The enzyme catalyses dCTP + H2O + H(+) = dUTP + NH4(+). The protein operates within pyrimidine metabolism; dUMP biosynthesis; dUMP from dCTP (dUTP route): step 1/2. In terms of biological role, catalyzes the deamination of dCTP to dUTP. This is dCTP deaminase from Buchnera aphidicola subsp. Acyrthosiphon pisum (strain APS) (Acyrthosiphon pisum symbiotic bacterium).